The chain runs to 389 residues: Formate-dependent phosphoribosylglycinamide formyltransferase (389 aa).

Residues 12–13 and Glu-72 contribute to the N(1)-(5-phospho-beta-D-ribosyl)glycinamide site; that span reads EL. Residues Arg-104, Lys-145, 150–155, 185–188, and Glu-193 each bind ATP; these read SSGKGQ and EEFI. In terms of domain architecture, ATP-grasp spans 109–301; sequence DLAAKELGLK…EFELHLRAVL (193 aa). Mg(2+)-binding residues include Glu-258 and Glu-271. N(1)-(5-phospho-beta-D-ribosyl)glycinamide contacts are provided by residues Asp-278, Lys-350, and 357 to 358; that span reads RR.

The protein belongs to the PurK/PurT family. Homodimer.

The catalysed reaction is N(1)-(5-phospho-beta-D-ribosyl)glycinamide + formate + ATP = N(2)-formyl-N(1)-(5-phospho-beta-D-ribosyl)glycinamide + ADP + phosphate + H(+). It participates in purine metabolism; IMP biosynthesis via de novo pathway; N(2)-formyl-N(1)-(5-phospho-D-ribosyl)glycinamide from N(1)-(5-phospho-D-ribosyl)glycinamide (formate route): step 1/1. Functionally, involved in the de novo purine biosynthesis. Catalyzes the transfer of formate to 5-phospho-ribosyl-glycinamide (GAR), producing 5-phospho-ribosyl-N-formylglycinamide (FGAR). Formate is provided by PurU via hydrolysis of 10-formyl-tetrahydrofolate. In Phocaeicola vulgatus (strain ATCC 8482 / DSM 1447 / JCM 5826 / CCUG 4940 / NBRC 14291 / NCTC 11154) (Bacteroides vulgatus), this protein is Formate-dependent phosphoribosylglycinamide formyltransferase.